Here is a 265-residue protein sequence, read N- to C-terminus: 5'-nucleotidase SurE (265 aa).

The a divalent metal cation site is built by D8, D9, S40, and N98.

This sequence belongs to the SurE nucleotidase family. A divalent metal cation is required as a cofactor.

Its subcellular location is the cytoplasm. It carries out the reaction a ribonucleoside 5'-phosphate + H2O = a ribonucleoside + phosphate. Functionally, nucleotidase that shows phosphatase activity on nucleoside 5'-monophosphates. In Thermosynechococcus vestitus (strain NIES-2133 / IAM M-273 / BP-1), this protein is 5'-nucleotidase SurE.